We begin with the raw amino-acid sequence, 597 residues long: Elongation factor 4 (597 aa).

Residues 2–184 enclose the tr-type G domain; the sequence is KNIRNFSIIA…EIVAKIPAPT (183 aa). GTP-binding positions include 14–19 and 131–134; these read DHGKST and NKID.

It belongs to the TRAFAC class translation factor GTPase superfamily. Classic translation factor GTPase family. LepA subfamily.

It localises to the cell inner membrane. It carries out the reaction GTP + H2O = GDP + phosphate + H(+). Required for accurate and efficient protein synthesis under certain stress conditions. May act as a fidelity factor of the translation reaction, by catalyzing a one-codon backward translocation of tRNAs on improperly translocated ribosomes. Back-translocation proceeds from a post-translocation (POST) complex to a pre-translocation (PRE) complex, thus giving elongation factor G a second chance to translocate the tRNAs correctly. Binds to ribosomes in a GTP-dependent manner. This chain is Elongation factor 4, found in Neisseria meningitidis serogroup C (strain 053442).